Consider the following 176-residue polypeptide: MINISINKPIQPLLIGKVGKSYGILGWINIFSFTEEQEKIFNYLPWFFFKEKNWTRIQIKNWKKYKNNFIVHIKDISDRSVVSQFTNADIIISKHTLPALKKNDYYWNDIINYKVFNIDQHYLGTVINLIRTRNNDILIVKNKLKIHQKNILIPFIDNKIIKNVNTDKKFILVQWD.

Positions 102–175 (KNDYYWNDII…TDKKFILVQW (74 aa)) constitute a PRC barrel domain.

Belongs to the RimM family. Binds ribosomal protein uS19.

The protein resides in the cytoplasm. An accessory protein needed during the final step in the assembly of 30S ribosomal subunit, possibly for assembly of the head region. Essential for efficient processing of 16S rRNA. May be needed both before and after RbfA during the maturation of 16S rRNA. It has affinity for free ribosomal 30S subunits but not for 70S ribosomes. The protein is Ribosome maturation factor RimM of Buchnera aphidicola subsp. Acyrthosiphon pisum (strain APS) (Acyrthosiphon pisum symbiotic bacterium).